A 409-amino-acid chain; its full sequence is MKLKRIAALLTAAVMSVGVMASCGGSKSDDKSKADTKSAAETSGAEGDSSESEEIPVSQTHTNDPMTVTSAKDLVAKMSNGWNLGNTMDATGEGLESEISWLPTKVYTNKFMIDMLPEAGFNVLRIPVSWGNHLIDNNYTIDPAWMDRVQEIVNYGIDDGMYVILNTHHEEWYMPKPSEKDGDIEELKAIWSQIADRFKGYDEHLIFEGLNEPRLRGEGAEWTGTSEAREIINEYEKAFVETVRASGGNNGDRCLMITGYAASSGYNNLSAIELPEDSDKLIISVHAYLPYSFALDTKGTDKYDPEDTAIPTLFESLNELFISRDIPVIVGEFGSMNKDNIDDRVKCLDDYLGNAAKYDIPCVWWDNYARIGNGENFGLLNRQEYDWYFPKLMDVFKKYAESDPSAAAA.

The N-terminal stretch at 1–21 (MKLKRIAALLTAAVMSVGVMA) is a signal peptide. A disordered region spans residues 23-66 (CGGSKSDDKSKADTKSAAETSGAEGDSSESEEIPVSQTHTNDPM). The span at 27–38 (KSDDKSKADTKS) shows a compositional bias: basic and acidic residues. Residues 57-66 (VSQTHTNDPM) are compositionally biased toward polar residues. The active-site Proton donor is the Glu212. Glu332 serves as the catalytic Nucleophile.

This sequence belongs to the glycosyl hydrolase 5 (cellulase A) family.

The enzyme catalyses Endohydrolysis of (1-&gt;4)-beta-D-glucosidic linkages in cellulose, lichenin and cereal beta-D-glucans.. The chain is Endoglucanase B (celB) from Ruminococcus albus.